A 404-amino-acid polypeptide reads, in one-letter code: Glycosylated lysosomal membrane protein B (404 aa).

The N-terminal stretch at methionine 1–glycine 24 is a signal peptide. Residues glutamine 25–serine 364 lie on the Lumenal side of the membrane. Asparagine 85, asparagine 124, asparagine 128, asparagine 142, asparagine 152, asparagine 156, asparagine 163, asparagine 168, asparagine 178, asparagine 189, asparagine 205, asparagine 221, asparagine 266, asparagine 303, and asparagine 330 each carry an N-linked (GlcNAc...) asparagine glycan. Residues isoleucine 365–glycine 385 traverse the membrane as a helical segment. The Cytoplasmic segment spans residues threonine 386–asparagine 404. Residues tyrosine 400–asparagine 404 carry the Lysosomal targeting motif motif.

The protein belongs to the GLMP family. Interacts (via lumenal domain) with lysosomal protein MFSD1; the interaction starts while both proteins are still in the endoplasmic reticulum and is required for stabilization of MFSD1 in lysosomes but has no direct effect on its targeting to lysosomes or transporter activity.

The protein localises to the lysosome membrane. In terms of biological role, required to protect lysosomal transporter MFSD1 from lysosomal proteolysis and for MFSD1 lysosomal localization. This chain is Glycosylated lysosomal membrane protein B (glmp-b), found in Xenopus laevis (African clawed frog).